The chain runs to 64 residues: Large ribosomal subunit protein bL35 (64 aa).

The interval 20–42 is disordered; sequence GRVKREKMYGSHNLEKKNRKRTR. The segment covering 25–35 has biased composition (basic and acidic residues); that stretch reads EKMYGSHNLEK.

This sequence belongs to the bacterial ribosomal protein bL35 family.

The polypeptide is Large ribosomal subunit protein bL35 (Chlorobium phaeobacteroides (strain BS1)).